The primary structure comprises 468 residues: Glutamate--tRNA ligase (468 aa).

A 'HIGH' region motif is present at residues 14 to 24 (PSPTGFIHLGN). Positions 246 to 250 (KMSKR) match the 'KMSKS' region motif. Lys249 lines the ATP pocket.

This sequence belongs to the class-I aminoacyl-tRNA synthetase family. Glutamate--tRNA ligase type 1 subfamily. In terms of assembly, monomer.

The protein resides in the cytoplasm. It catalyses the reaction tRNA(Glu) + L-glutamate + ATP = L-glutamyl-tRNA(Glu) + AMP + diphosphate. Catalyzes the attachment of glutamate to tRNA(Glu) in a two-step reaction: glutamate is first activated by ATP to form Glu-AMP and then transferred to the acceptor end of tRNA(Glu). The polypeptide is Glutamate--tRNA ligase (Leptothrix cholodnii (strain ATCC 51168 / LMG 8142 / SP-6) (Leptothrix discophora (strain SP-6))).